A 297-amino-acid polypeptide reads, in one-letter code: MITFLSGGTGTPKLLEGARNMLPDSDISVIVNTGEDIWYQGGHISPDVDTVMYLFAGLLNTDTWWGVRGDSFLTHDVLKTLLPASYMSIGDKDRAVHIARAEWLKKGMTLTRVTQQLCSHFGVSTTILPMSDSPYTTYVRTAKGDIHFQEYWVRYRGNTDICAVLHVPDEQPPATPEVIDAIRKAEVVIIGPSNPVTSILPILSCTGVREELAQKKVIAISPFIGEGPVSGPAAQLMKTMKYPADSTGVRALYADLVDVFIQDERDTAQVPGSVRLDTLMKTPAIAERLMREILTRL.

Residue aspartate 49 participates in 7,8-didemethyl-8-hydroxy-5-deazariboflavin binding.

The protein belongs to the CofD family. As to quaternary structure, homodimer. Mg(2+) serves as cofactor.

It carries out the reaction (2S)-lactyl-2-diphospho-5'-guanosine + 7,8-didemethyl-8-hydroxy-5-deazariboflavin = oxidized coenzyme F420-0 + GMP + H(+). Its pathway is cofactor biosynthesis; coenzyme F420 biosynthesis. Catalyzes the transfer of the 2-phospholactate moiety from (2S)-lactyl-2-diphospho-5'-guanosine to 7,8-didemethyl-8-hydroxy-5-deazariboflavin (FO) with the formation of oxidized coenzyme F420-0 and GMP. This chain is 2-phospho-L-lactate transferase, found in Methanospirillum hungatei JF-1 (strain ATCC 27890 / DSM 864 / NBRC 100397 / JF-1).